The following is a 156-amino-acid chain: Small ribosomal subunit protein uS7 (156 aa).

Belongs to the universal ribosomal protein uS7 family. Part of the 30S ribosomal subunit. Contacts proteins S9 and S11.

One of the primary rRNA binding proteins, it binds directly to 16S rRNA where it nucleates assembly of the head domain of the 30S subunit. Is located at the subunit interface close to the decoding center, probably blocks exit of the E-site tRNA. This chain is Small ribosomal subunit protein uS7, found in Prochlorococcus marinus (strain MIT 9312).